The primary structure comprises 274 residues: Ribosomal RNA small subunit methyltransferase A (274 aa).

The S-adenosyl-L-methionine site is built by N26, L28, G53, E74, D94, and N114.

This sequence belongs to the class I-like SAM-binding methyltransferase superfamily. rRNA adenine N(6)-methyltransferase family. RsmA subfamily.

It localises to the cytoplasm. The enzyme catalyses adenosine(1518)/adenosine(1519) in 16S rRNA + 4 S-adenosyl-L-methionine = N(6)-dimethyladenosine(1518)/N(6)-dimethyladenosine(1519) in 16S rRNA + 4 S-adenosyl-L-homocysteine + 4 H(+). Its function is as follows. Specifically dimethylates two adjacent adenosines (A1518 and A1519) in the loop of a conserved hairpin near the 3'-end of 16S rRNA in the 30S particle. May play a critical role in biogenesis of 30S subunits. The polypeptide is Ribosomal RNA small subunit methyltransferase A (Bdellovibrio bacteriovorus (strain ATCC 15356 / DSM 50701 / NCIMB 9529 / HD100)).